Consider the following 175-residue polypeptide: MRHNKAGRRLGRTTSHRIAMFRNMVTSLFAHERITTTDAKAKELRSIAEKMITLGKRGDLHAVRQAASYIRDKKVVTKLFSTIAPRYKERDGGYTRIIKLGIRPGDCAPLSVIELVEEQFEKKVKKSKPTAPAQAVATKPAVEETREAAAAQPQEPEVEISEVKDPAEECEAKAD.

The tract at residues 124–175 (VKKSKPTAPAQAVATKPAVEETREAAAAQPQEPEVEISEVKDPAEECEAKAD) is disordered. Basic and acidic residues predominate over residues 161–175 (SEVKDPAEECEAKAD).

This sequence belongs to the bacterial ribosomal protein bL17 family. Part of the 50S ribosomal subunit. Contacts protein L32.

The protein is Large ribosomal subunit protein bL17 of Geobacter sulfurreducens (strain ATCC 51573 / DSM 12127 / PCA).